A 99-amino-acid chain; its full sequence is Integration host factor subunit alpha (99 aa).

The protein belongs to the bacterial histone-like protein family. As to quaternary structure, heterodimer of an alpha and a beta chain.

Its function is as follows. This protein is one of the two subunits of integration host factor, a specific DNA-binding protein that functions in genetic recombination as well as in transcriptional and translational control. This is Integration host factor subunit alpha from Enterobacter sp. (strain 638).